The sequence spans 625 residues: tRNA-guanine(15) transglycosylase (625 aa).

The Nucleophile role is filled by aspartate 86. Positions 121 and 184 each coordinate substrate. Residues 546 to 621 (GLRVVVDDES…VAVKVHEGVN (76 aa)) enclose the PUA domain.

This sequence belongs to the archaeosine tRNA-ribosyltransferase family. It depends on Zn(2+) as a cofactor.

The catalysed reaction is guanosine(15) in tRNA + 7-cyano-7-deazaguanine = 7-cyano-7-carbaguanosine(15) in tRNA + guanine. The protein operates within tRNA modification; archaeosine-tRNA biosynthesis. Its function is as follows. Exchanges the guanine residue with 7-cyano-7-deazaguanine (preQ0) at position 15 in the dihydrouridine loop (D-loop) of archaeal tRNAs. This is tRNA-guanine(15) transglycosylase from Picrophilus torridus (strain ATCC 700027 / DSM 9790 / JCM 10055 / NBRC 100828 / KAW 2/3).